The sequence spans 1228 residues: MSSLYTLRAAAQYDRRLESKKGSGWVEHKLERKGERGNTHYCSEFDISKGAKILQLVQIGNTEVGRTFLEGNRFVRANIFEIIRKTMVGRLGYDFESELWVCRNCDKTSEKYFKKCDCGETYYYSERNLMRTMNDLMYQFDMTPSEINSVDLEYLANAVDYAEQLVKRSQVPEPVELAMMEPIVASGEGILMVSEPEVMPVTTKVEEAWTIQIGEIPVPLVVIKETPVISGVEGTLNSTGFSLEADITKLVEKEILQEEVKEAVHLALEVGNEIAEKKPELKLIPYWSASLELHKRIRKHKEHAKIAAIQVQKEREKDQKVFSALELRLNLKSRRRNQAVVCDKRGTLKWETQRGHKKSKLMQQASDFVVTQIHCDFGCKTQYSEPHIPGIKQSTSKKICKPRKHSRIVGNSKINYIMKNLCDTIIERGIPVELVTKRCKRRILQKEGRSYVQLRHMNGIRARQDVSSSPDMELLFTQFCKFLVGHKPLKSKNLTFGSSGLIFKPKFADNVGRYFGDYFVVRGRLGGKLFDGRSKLARSVYAKMDQYNDVAEKFWLGFNRAFLRHRKPTDHTCTSDMDVTMCGEVAALATIILFPCHKITCNTCMSKVKGRVIDEVGEDLNCELERLRETLSAYGGSFGHVSTLLDQLNRVLNARNMNDGAFKEIAKKIDEKKESPWTHMTTINNTLYKGSLATGYEFERASNSLREIVRWHLKRTESIKAGSVESFRNKRSGKAHFNPALTCDNQLDKNGNFLWGERQYHAKRFFANYFEKIDHSKGYEYYSQRQNPNGIRKIAIGNLVFSTNLERFRQQMVEHHIDQGPITRECIALRNNNYVHVCSCVTLDDGTPATSELKTPTKNHIVLGNSGDPKYVDLPTLESDSMYIAKKGYCYMNIFLAMLINIPENEAKDFTKRVRDLVGSKLGEWPTMLDVATCANQLVVFHPDAANAELPQILVDHRQKTMHVIDSFGSVDSGYHILKANTVNQLIQFARDPLDSEMKHYIVGGEFDPTTNCLHQLIRVIYKPHELRSLLRNEPYLIVIALMSPSVLLTLFNSGAVEHALNYWIKRDQDVVEVIVLVEQLCRKVTLARTILEQFNEIRQNARDLHELMDRNNKPWISYDRSLELLSVYANSQLTDEGLLKQGFSTLDPRLREAVEKNLRHSFAGRMACVKFVSKVALKVLCVQITTVFFRVFKAKRARRFKNCIRLLTEILCTRGRKSVPTASQGWG.

The region spanning 408–547 (IVGNSKINYI…RSVYAKMDQY (140 aa)) is the Peptidase S30 domain. Active-site for P1 proteinase activity residues include His-456, Asp-465, and Ser-499. An Involved in interaction with stylet and aphid transmission motif is present at residues 598 to 601 (KITC). Positions 856–858 (PTK) match the Involved in virions binding and aphid transmission motif. One can recognise a Peptidase C6 domain in the interval 882-1004 (MYIAKKGYCY…DSEMKHYIVG (123 aa)). Catalysis depends on for helper component proteinase activity residues Cys-890 and His-963.

Belongs to the potyviridae P3N-PIPO polyprotein family. Interacts (via PIPO domain) with host PCaP1 protein; this interaction may help to anchor the movement complex to the plasma membrane from which the complex could move to the plasmodesmata. Potyviral RNA is expressed as two polyproteins which undergo post-translational proteolytic processing. Genome polyprotein is processed by NIa-pro, P1 and HC-pro proteinases resulting in the production of at least ten individual proteins. P3N-PIPO is cleaved by P1 and HC-pro proteinases resulting in the production of three individual proteins. The P1 proteinase and the HC-pro cleave only their respective C-termini autocatalytically.

The protein localises to the host cell junction. Its subcellular location is the host plasmodesma. The catalysed reaction is Hydrolyzes a Gly-|-Gly bond at its own C-terminus, commonly in the sequence -Tyr-Xaa-Val-Gly-|-Gly, in the processing of the potyviral polyprotein.. Its function is as follows. Required for aphid transmission and also has proteolytic activity. Only cleaves a Gly-Gly dipeptide at its own C-terminus. Interacts with virions and aphid stylets. Acts as a suppressor of RNA-mediated gene silencing, also known as post-transcriptional gene silencing (PTGS), a mechanism of plant viral defense that limits the accumulation of viral RNAs. May have RNA-binding activity. In terms of biological role, allows efficient cell to cell propagation, by bypassing the host cell wall barrier. Transports viral genome to neighboring plant cells directly through plasmosdesmata, without any budding. The sequence is that of P3N-PIPO polyprotein from Carica papaya (Papaya).